The primary structure comprises 397 residues: Nuclear RNA export factor 5 (397 aa).

The RRM domain occupies 13–92 (WFKVTIPYGI…IFVSHFTAPY (80 aa)). LRR repeat units follow at residues 160–185 (ELLSLNLCNNKLYQLDGLSDITEKAP), 186–209 (KVKTLNLSKNKLESAWELGKVKGL), 210–237 (KLEELWLEGNPLCSTFSDQSAYVSAIRD), and 238–265 (CFPKLLRLDGRELSAPVIVDIDSSETMK). The 88-residue stretch at 280 to 367 (LVLQFLQQSN…ESQRWWCLLS (88 aa)) folds into the NTF2; truncated domain.

It belongs to the NXF family. As to quaternary structure, interacts with NXT1 and NXT2.

It is found in the cytoplasm. The protein localises to the nucleus. Could be involved in the export of mRNA from the nucleus to the cytoplasm. Could also have a role in polarized cytoplasmic transport and localization of mRNA in neurons. In Homo sapiens (Human), this protein is Nuclear RNA export factor 5 (NXF5).